An 892-amino-acid polypeptide reads, in one-letter code: Histone deacetylase 4 (892 aa).

A disordered region spans residues 145 to 225 (NGNLSNLSVP…MSNVNGHDNS (81 aa)). Composition is skewed to polar residues over residues 171-192 (SAPT…ISQL) and 208-222 (ESNS…VNGH). Positions 481–822 (STGLGYDPLM…VQALIGESDD (342 aa)) are histone deacetylase. The active site involves H628.

This sequence belongs to the histone deacetylase family. HD type 2 subfamily.

The protein resides in the nucleus. It carries out the reaction N(6)-acetyl-L-lysyl-[histone] + H2O = L-lysyl-[histone] + acetate. Responsible for the deacetylation of lysine residues on the N-terminal part of the core histones (H2A, H2B, H3 and H4). Histone deacetylation gives a tag for epigenetic repression and plays an important role in transcriptional regulation, cell cycle progression and developmental events. Histone deacetylases act via the formation of large multiprotein complexes. This Caenorhabditis briggsae protein is Histone deacetylase 4 (hda-4).